The following is an 813-amino-acid chain: Leucine--tRNA ligase (813 aa).

The 'HIGH' region motif lies at 42–52 (PYTSGNLHIGH). Residues 580–584 (KMSKS) carry the 'KMSKS' region motif. Residue Lys583 participates in ATP binding.

It belongs to the class-I aminoacyl-tRNA synthetase family.

The protein localises to the cytoplasm. It catalyses the reaction tRNA(Leu) + L-leucine + ATP = L-leucyl-tRNA(Leu) + AMP + diphosphate. This chain is Leucine--tRNA ligase, found in Dehalococcoides mccartyi (strain CBDB1).